Reading from the N-terminus, the 275-residue chain is MQYQNPNTLQAVILDWAGTVVDFGSFAPTQIFVEAFAEFDVQVSIEEARGPMGMGKWDHIRTLCDQPQVAERYRKAFGRTPTDDDVTAIYQRFMPLQIEKIAEHSALIPGALDTIARLRVQGIKVGSCSGYPKQVMDKVVALAATNGYIADHVVATDEVPNGRPWPAQALANVIALGIDDVAACVKVDDTVPGILEGRRAGMWTVALTCSGNALGLTYEQFRALDAATLASERKRIEAMFEGSRPHYLIDTITDLPAVISDINARLARGEMPQSN.

Asp15 acts as the Nucleophile in catalysis. 2 residues coordinate Mg(2+): Asp15 and Ala17. Lys56 acts as the Schiff-base intermediate with substrate in catalysis. Residue Asp189 participates in Mg(2+) binding.

It belongs to the HAD-like hydrolase superfamily. PhnX family. In terms of assembly, homodimer. Mg(2+) serves as cofactor.

The enzyme catalyses phosphonoacetaldehyde + H2O = acetaldehyde + phosphate + H(+). Involved in phosphonate degradation. The protein is Phosphonoacetaldehyde hydrolase of Pseudomonas fluorescens (strain SBW25).